Here is a 401-residue protein sequence, read N- to C-terminus: Formate-dependent phosphoribosylglycinamide formyltransferase (401 aa).

Residues 22–23 (EL) and Glu-82 each bind N(1)-(5-phospho-beta-D-ribosyl)glycinamide. ATP is bound by residues Arg-115, Lys-157, 162–167 (SSGKGQ), 197–200 (EGFI), and Glu-205. The ATP-grasp domain occupies 120 to 315 (RLAAESLGLP…EFELHARAIL (196 aa)). Residues Glu-274 and Glu-286 each coordinate Mg(2+). Residues Asp-293, Lys-362, and 369 to 370 (RR) each bind N(1)-(5-phospho-beta-D-ribosyl)glycinamide.

Belongs to the PurK/PurT family. As to quaternary structure, homodimer.

The enzyme catalyses N(1)-(5-phospho-beta-D-ribosyl)glycinamide + formate + ATP = N(2)-formyl-N(1)-(5-phospho-beta-D-ribosyl)glycinamide + ADP + phosphate + H(+). It functions in the pathway purine metabolism; IMP biosynthesis via de novo pathway; N(2)-formyl-N(1)-(5-phospho-D-ribosyl)glycinamide from N(1)-(5-phospho-D-ribosyl)glycinamide (formate route): step 1/1. In terms of biological role, involved in the de novo purine biosynthesis. Catalyzes the transfer of formate to 5-phospho-ribosyl-glycinamide (GAR), producing 5-phospho-ribosyl-N-formylglycinamide (FGAR). Formate is provided by PurU via hydrolysis of 10-formyl-tetrahydrofolate. The polypeptide is Formate-dependent phosphoribosylglycinamide formyltransferase (Cupriavidus necator (strain ATCC 17699 / DSM 428 / KCTC 22496 / NCIMB 10442 / H16 / Stanier 337) (Ralstonia eutropha)).